Reading from the N-terminus, the 243-residue chain is Probable sentrin-specific protease 8 (243 aa).

The tract at residues 12 to 185 (SAIYQSDINI…LYVLSIIEEL (174 aa)) is protease. Residues His-109 and Asp-126 contribute to the active site. Cys-174 acts as the Nucleophile in catalysis.

The protein belongs to the peptidase C48 family.

Functionally, protease that catalyzes two essential functions in the nedd8 pathway: processing of full-length nedd8 to its mature form and deconjugation of nedd8 from targeted proteins. In Dictyostelium discoideum (Social amoeba), this protein is Probable sentrin-specific protease 8 (senp8).